The following is a 411-amino-acid chain: Acetylornithine aminotransferase, mitochondrial (411 aa).

Lys262 is subject to N6-(pyridoxal phosphate)lysine.

This sequence belongs to the class-III pyridoxal-phosphate-dependent aminotransferase family. It depends on pyridoxal 5'-phosphate as a cofactor.

Its subcellular location is the mitochondrion matrix. It catalyses the reaction N(2)-acetyl-L-ornithine + 2-oxoglutarate = N-acetyl-L-glutamate 5-semialdehyde + L-glutamate. It functions in the pathway amino-acid biosynthesis; L-arginine biosynthesis; N(2)-acetyl-L-ornithine from L-glutamate: step 4/4. This Yarrowia lipolytica (strain CLIB 122 / E 150) (Yeast) protein is Acetylornithine aminotransferase, mitochondrial (ARG8).